Here is a 386-residue protein sequence, read N- to C-terminus: Probable pectin lyase F (386 aa).

Positions 1-16 (MKTAVLSLLLALQAYA) are cleaved as a signal peptide. Cysteine 77 and cysteine 101 are joined by a disulfide. N-linked (GlcNAc...) asparagine glycosylation is present at asparagine 124. Arginine 251 is an active-site residue. Cysteines 326 and 334 form a disulfide.

It belongs to the polysaccharide lyase 1 family.

It is found in the secreted. It carries out the reaction Eliminative cleavage of (1-&gt;4)-alpha-D-galacturonan methyl ester to give oligosaccharides with 4-deoxy-6-O-methyl-alpha-D-galact-4-enuronosyl groups at their non-reducing ends.. Its function is as follows. Pectinolytic enzymes consist of four classes of enzymes: pectin lyase, polygalacturonase, pectin methylesterase and rhamnogalacturonase. Among pectinolytic enzymes, pectin lyase is the most important in depolymerization of pectin, since it cleaves internal glycosidic bonds of highly methylated pectins. In Neosartorya fischeri (strain ATCC 1020 / DSM 3700 / CBS 544.65 / FGSC A1164 / JCM 1740 / NRRL 181 / WB 181) (Aspergillus fischerianus), this protein is Probable pectin lyase F (pelF).